Here is a 140-residue protein sequence, read N- to C-terminus: NADPH-dependent 7-cyano-7-deazaguanine reductase (140 aa).

Residue Cys51 is the Thioimide intermediate of the active site. The Proton donor role is filled by Asp58. Substrate contacts are provided by residues 73 to 75 and 92 to 93; these read LES and HE.

The protein belongs to the GTP cyclohydrolase I family. QueF type 1 subfamily.

Its subcellular location is the cytoplasm. The enzyme catalyses 7-aminomethyl-7-carbaguanine + 2 NADP(+) = 7-cyano-7-deazaguanine + 2 NADPH + 3 H(+). It participates in tRNA modification; tRNA-queuosine biosynthesis. In terms of biological role, catalyzes the NADPH-dependent reduction of 7-cyano-7-deazaguanine (preQ0) to 7-aminomethyl-7-deazaguanine (preQ1). The protein is NADPH-dependent 7-cyano-7-deazaguanine reductase of Syntrophus aciditrophicus (strain SB).